The following is a 290-amino-acid chain: Arylamine N-acetyltransferase 2 (290 aa).

C68 acts as the Acyl-thioester intermediate in catalysis. 2 residues coordinate CoA: T103 and G104. 106–107 (VH) provides a ligand contact to substrate. Active-site residues include H107 and D122. Residues Y208, T214, and S287 each coordinate CoA.

Belongs to the arylamine N-acetyltransferase family.

The protein localises to the cytoplasm. It carries out the reaction an arylamine + acetyl-CoA = an N-acetylarylamine + CoA. The catalysed reaction is an N-hydroxyarylamine + acetyl-CoA = an N-acetoxyarylamine + CoA. Catalyzes the N- or O-acetylation of various arylamine and heterocyclic amine substrates. Participates in the detoxification of a plethora of hydrazine and arylamine drugs, and is able to bioactivate several known carcinogens. The polypeptide is Arylamine N-acetyltransferase 2 (NAT2) (Homo sapiens (Human)).